The chain runs to 197 residues: 7-methyl-GTP pyrophosphatase (197 aa).

The active-site Proton acceptor is the aspartate 69.

It belongs to the Maf family. YceF subfamily. Requires a divalent metal cation as cofactor.

Its subcellular location is the cytoplasm. The catalysed reaction is N(7)-methyl-GTP + H2O = N(7)-methyl-GMP + diphosphate + H(+). Nucleoside triphosphate pyrophosphatase that hydrolyzes 7-methyl-GTP (m(7)GTP). May have a dual role in cell division arrest and in preventing the incorporation of modified nucleotides into cellular nucleic acids. This Pectobacterium atrosepticum (strain SCRI 1043 / ATCC BAA-672) (Erwinia carotovora subsp. atroseptica) protein is 7-methyl-GTP pyrophosphatase.